Consider the following 198-residue polypeptide: Recombination protein RecR (198 aa).

The segment at 57–72 (CTICGHITDTDPCYIC) adopts a C4-type zinc-finger fold. The Toprim domain occupies 80–175 (TTICVVQDPK…KVTRIAHGLP (96 aa)).

The protein belongs to the RecR family.

Its function is as follows. May play a role in DNA repair. It seems to be involved in an RecBC-independent recombinational process of DNA repair. It may act with RecF and RecO. The protein is Recombination protein RecR of Geobacillus kaustophilus (strain HTA426).